The primary structure comprises 291 residues: Pre-mRNA-splicing factor SPP381 (291 aa).

2 disordered regions span residues 1 to 99 and 239 to 266; these read MSFR…PLPR and EKEK…YKIT. Polar residues-rich tracts occupy residues 28–41 and 52–62; these read QNVS…SLSH and TGKNRTPNDGQ. Over residues 63-91 the composition is skewed to acidic residues; the sequence is ESNESDGSPESDESPESEESSDNSDSSDS. The segment covering 239 to 258 has biased composition (basic and acidic residues); sequence EKEKLDHKKQRSAEKVEKSH.

Belongs to the SPP381 family. As to quaternary structure, component of the U4/U6-U5 tri-snRNP complex composed of the U4, U6 and U5 snRNAs and at least PRP3, PRP4, PRP6, PRP8, PRP18, PRP31, PRP38, SNU13, SNU23, SNU66, SNU114, SPP381, SMB1, SMD1, SMD2, SMD3, SMX2, SMX3, LSM2, LSM3, LSM4, LSM5, LSM6, LSM7, LSM8, BRR2 and DIB1. Interacts with PRP38.

The protein localises to the nucleus. Component of the spliceosome and rRNA processing machinery. In association with the spliceosomal U4/U6.U5 tri-snRNP particle, required for splicing of pre-mRNA. This Saccharomyces cerevisiae (strain ATCC 204508 / S288c) (Baker's yeast) protein is Pre-mRNA-splicing factor SPP381 (SPP381).